Here is a 171-residue protein sequence, read N- to C-terminus: Photosystem I assembly protein Ycf3 (171 aa).

TPR repeat units follow at residues 33-66, 70-103, and 118-151; these read AFSYYRYGMSAQSSGDYAEALENYYEALKLEEDP, SYILYNIGLIYGNNGDYSKSLDYYHQALDLNSRL, and GTKSSEKKEFEVAQNNFDKAASYWKKAIRLAPNN.

It belongs to the Ycf3 family.

The protein resides in the plastid. Its subcellular location is the chloroplast thylakoid membrane. In terms of biological role, essential for the assembly of the photosystem I (PSI) complex. May act as a chaperone-like factor to guide the assembly of the PSI subunits. The polypeptide is Photosystem I assembly protein Ycf3 (Emiliania huxleyi (Coccolithophore)).